Reading from the N-terminus, the 309-residue chain is Branched-chain-amino-acid aminotransferase (309 aa).

N6-(pyridoxal phosphate)lysine is present on lysine 160.

It belongs to the class-IV pyridoxal-phosphate-dependent aminotransferase family. As to quaternary structure, homohexamer. Pyridoxal 5'-phosphate serves as cofactor.

The catalysed reaction is L-leucine + 2-oxoglutarate = 4-methyl-2-oxopentanoate + L-glutamate. The enzyme catalyses L-isoleucine + 2-oxoglutarate = (S)-3-methyl-2-oxopentanoate + L-glutamate. It catalyses the reaction L-valine + 2-oxoglutarate = 3-methyl-2-oxobutanoate + L-glutamate. It participates in amino-acid biosynthesis; L-isoleucine biosynthesis; L-isoleucine from 2-oxobutanoate: step 4/4. Its pathway is amino-acid biosynthesis; L-leucine biosynthesis; L-leucine from 3-methyl-2-oxobutanoate: step 4/4. The protein operates within amino-acid biosynthesis; L-valine biosynthesis; L-valine from pyruvate: step 4/4. In terms of biological role, acts on leucine, isoleucine and valine. This chain is Branched-chain-amino-acid aminotransferase (ilvE), found in Escherichia coli O157:H7.